Consider the following 355-residue polypeptide: Homoserine O-succinyltransferase (355 aa).

The active-site Acyl-thioester intermediate is the C146. Residues K167 and S196 each coordinate substrate. Residue H239 is the Proton acceptor of the active site. E241 is an active-site residue. Residue R253 coordinates substrate.

This sequence belongs to the MetA family.

Its subcellular location is the cytoplasm. The enzyme catalyses L-homoserine + succinyl-CoA = O-succinyl-L-homoserine + CoA. It participates in amino-acid biosynthesis; L-methionine biosynthesis via de novo pathway; O-succinyl-L-homoserine from L-homoserine: step 1/1. Transfers a succinyl group from succinyl-CoA to L-homoserine, forming succinyl-L-homoserine. This Methylococcus capsulatus (strain ATCC 33009 / NCIMB 11132 / Bath) protein is Homoserine O-succinyltransferase.